Reading from the N-terminus, the 419-residue chain is Gustatory receptor for bitter taste 93a (419 aa).

Over 1–55 (MFSSSSAMTGKRAESWSRLLLLWLYRCARGLLVLSSSLDRDKLQLKATKQGSRNR) the chain is Cytoplasmic. Residues 56-76 (FLHILWRCIVVMIYAGLWPML) form a helical membrane-spanning segment. The Extracellular segment spans residues 77–90 (TSAVIGKRLESYAD). The chain crosses the membrane as a helical span at residues 91-111 (VLALAQSMSVSILAVISFVIQ). The Cytoplasmic portion of the chain corresponds to 112–145 (ARGENQFREVLNRYLALYQRICLTTRLRHLFPTK). Residues 146–166 (FVVFFLLKLFFTLCGCFHEII) form a helical membrane-spanning segment. Residues 167 to 184 (PLFENSHFDDISQMVGTG) are Extracellular-facing. The chain crosses the membrane as a helical span at residues 185–205 (FGIYMWLGTLCVLDACFLGFL). Topologically, residues 206–277 (VSGILYEHMA…NSFRRILQWQ (72 aa)) are cytoplasmic. A helical membrane pass occupies residues 278–298 (ILFYIYLNFINICLMLYQYIL). Topologically, residues 299–305 (HFLNDDE) are extracellular. A helical transmembrane segment spans residues 306–326 (VVFVSIVMAFVKLANLVLLMM). Residues 327–383 (CADYTVRQSEVPKKLPLDIVCSDMDERWDKSVETFLGQLQTQRLEIKVLGFFHLNNE) are Cytoplasmic-facing. Residues 384–404 (FILLILSAIISYLFILIQFGI) form a helical membrane-spanning segment. The Extracellular portion of the chain corresponds to 405–419 (TGGFEASEDIKNRFD).

This sequence belongs to the insect chemoreceptor superfamily. Gustatory receptor (GR) family. Gr93a subfamily. In terms of tissue distribution, in larvae, is expressed in neurons of the dorsal pharyngeal sense organs.

Its subcellular location is the cell membrane. Functionally, gustatory receptor required for response to the bitter in taste neurons. Gr93a cells respond to bitter compounds such as caffeine. Flies avoid bitter substances, suggesting that Gr93a neuron activity is sufficient to mediate avoidance behavior. The polypeptide is Gustatory receptor for bitter taste 93a (Gr93a) (Drosophila melanogaster (Fruit fly)).